Here is a 351-residue protein sequence, read N- to C-terminus: MKGFAMLGINKLGWIEKERPVAGSYDAIVRPLAVSPCTSDIHTVFEGALGDRKNMILGHEAVGEVVEVGSEVKDFKPGDRVIVPCTTPDWRSLEVQAGFQQHSNGMLAGWKFSNFKDGVFGEYFHVNDADMNLAILPKDMPLENAVMITDMMTTGFHGAELADIQMGSSVVVIGIGAVGLMGIAGAKLRGAGRIIGVGSRPICVEAAKFYGATDILNYKNGHIVDQVMKLTNGKGVDRVIMAGGGSETLSQAVSMVKPGGIISNINYHGSGDALLIPRVEWGCGMAHKTIKGGLCPGGRLRAEMLRDMVVYNRVDLSKLVTHVYHGFDHIEEALLLMKDKPKDLIKAVVIL.

4 residues coordinate Zn(2+): Cys37, His59, Glu60, and Asp150. Residues Ile175 to Val178, Gly198 to Arg200, Tyr218, Ile265 to Tyr267, and Lys340 contribute to the NADP(+) site.

It belongs to the zinc-containing alcohol dehydrogenase family. In terms of assembly, homotetramer. Requires Zn(2+) as cofactor.

The catalysed reaction is propan-2-ol + NADP(+) = acetone + NADPH + H(+). Functionally, alcohol dehydrogenase with a preference for medium chain secondary alcohols, such as 2-butanol and isopropanol. Has very low activity with primary alcohols, such as ethanol. Under physiological conditions, the enzyme reduces aldehydes and 2-ketones to produce secondary alcohols. Is active with acetaldehyde and propionaldehyde. This Clostridium beijerinckii (Clostridium MP) protein is NADP-dependent isopropanol dehydrogenase (adh).